Consider the following 478-residue polypeptide: UDP-N-acetylmuramate--L-alanine ligase (478 aa).

122-128 (GTHGKTT) contributes to the ATP binding site.

It belongs to the MurCDEF family.

It is found in the cytoplasm. It catalyses the reaction UDP-N-acetyl-alpha-D-muramate + L-alanine + ATP = UDP-N-acetyl-alpha-D-muramoyl-L-alanine + ADP + phosphate + H(+). It participates in cell wall biogenesis; peptidoglycan biosynthesis. Its function is as follows. Cell wall formation. The polypeptide is UDP-N-acetylmuramate--L-alanine ligase (Stenotrophomonas maltophilia (strain R551-3)).